Here is a 253-residue protein sequence, read N- to C-terminus: MRILLSNDDGVHAPGIQTLAKALREFADVQVVAPDRNRSGASNSLTLESSLRTFTFENGDIAVQMGTPTDCVYLGVNALMRPRPDIVVSGINAGPNLGDDVIYSGTVAAAMEGRHLGFPALAVSLDGHKHYDTAAAVTCSILRALCKEPLRTGRILNINVPDLPLDQIKGIRVTRCGSRHPADQVIPQQDPRGNTLYWIGPPGGKCDAGPDTDFAAVDEGYVSITPLHVDLTAHNAQDVVSDWLNSVGVGTQW.

D8, D9, S39, and N92 together coordinate a divalent metal cation.

This sequence belongs to the SurE nucleotidase family. A divalent metal cation serves as cofactor.

Its subcellular location is the cytoplasm. The catalysed reaction is a ribonucleoside 5'-phosphate + H2O = a ribonucleoside + phosphate. It catalyses the reaction a ribonucleoside 3'-phosphate + H2O = a ribonucleoside + phosphate. It carries out the reaction [phosphate](n) + H2O = [phosphate](n-1) + phosphate + H(+). Functionally, nucleotidase with a broad substrate specificity as it can dephosphorylate various ribo- and deoxyribonucleoside 5'-monophosphates and ribonucleoside 3'-monophosphates with highest affinity to 3'-AMP. Also hydrolyzes polyphosphate (exopolyphosphatase activity) with the preference for short-chain-length substrates (P20-25). Might be involved in the regulation of dNTP and NTP pools, and in the turnover of 3'-mononucleotides produced by numerous intracellular RNases (T1, T2, and F) during the degradation of various RNAs. The sequence is that of 5'/3'-nucleotidase SurE from Escherichia fergusonii (strain ATCC 35469 / DSM 13698 / CCUG 18766 / IAM 14443 / JCM 21226 / LMG 7866 / NBRC 102419 / NCTC 12128 / CDC 0568-73).